We begin with the raw amino-acid sequence, 101 residues long: MEIKHPATAGTLESSDIQITLSPATSGVAIQLQSSVEKQFGHQIRSVIEATLAKLGIENVAVDANDKGALDCTIKARTIAAVYRASDNKTFDWEEINAWIN.

Serine 14 is modified (O-(phosphoribosyl dephospho-coenzyme A)serine).

It belongs to the CitD family. As to quaternary structure, oligomer with a subunit composition of (alpha,beta,gamma)6.

The protein localises to the cytoplasm. Its function is as follows. Covalent carrier of the coenzyme of citrate lyase. This is Citrate lyase acyl carrier protein from Lacticaseibacillus casei (strain BL23) (Lactobacillus casei).